We begin with the raw amino-acid sequence, 115 residues long: Cholecystokinin (115 aa).

Positions 1-20 (MKSGVCLCVVMAVLAAGALA) are cleaved as a signal peptide. The propeptide occupies 21 to 70 (QPVVPAEATDPVEQRAQEAPRRQLRAVLRTDGEPRARLGALLARYIQQVR). Y97 carries the sulfotyrosine modification. F103 is modified (phenylalanine amide). Residues 107–115 (SAEDYEYPS) constitute a propeptide that is removed on maturation. Residues Y111 and Y113 each carry the sulfotyrosine modification.

The protein belongs to the gastrin/cholecystokinin family. Binds to CCK-A receptors in the pancreas and CCK-B receptors in the brain. The precursor is cleaved by proteases to produce a number of active cholecystokinins. As to expression, expressed and secreted by discrete enteroendocrine cells that reside as single cells scattered among enterocytes in the mucosa of the small intestine. Released into the blood following ingestion of a meal.

It localises to the secreted. In terms of biological role, this peptide hormone induces gall bladder contraction and the release of pancreatic enzymes in the gut. Its function in the brain is not clear. Binding to CCK-A receptors stimulates amylase release from the pancreas, binding to CCK-B receptors stimulates gastric acid secretion. The chain is Cholecystokinin (Cck) from Mus musculus (Mouse).